The sequence spans 166 residues: MFIKGVILSSYGVNGYARVKSISNNFCDFINLKNNKVLLKKSNSSSVEVKVVDVNIKGNSLFLKFEEIDTPEAVRPLIGFELWVDDSLASSLKEGEYYLGKLIGYAIVNNNKKLGEVVAFFEYLNSVFLEVRVGIKFFFIPFLSIYIGDINTQEKTIELKVLDLLK.

One can recognise a PRC barrel domain in the interval 94 to 166; it reads EGEYYLGKLI…IELKVLDLLK (73 aa).

The protein belongs to the RimM family. In terms of assembly, binds ribosomal protein uS19.

The protein localises to the cytoplasm. Its function is as follows. An accessory protein needed during the final step in the assembly of 30S ribosomal subunit, possibly for assembly of the head region. Essential for efficient processing of 16S rRNA. May be needed both before and after RbfA during the maturation of 16S rRNA. It has affinity for free ribosomal 30S subunits but not for 70S ribosomes. This chain is Ribosome maturation factor RimM, found in Borreliella burgdorferi (strain ATCC 35210 / DSM 4680 / CIP 102532 / B31) (Borrelia burgdorferi).